Consider the following 567-residue polypeptide: Septation ring formation regulator EzrA (567 aa).

Topologically, residues Met1–Glu2 are extracellular. Residues Ile3 to Tyr21 form a helical membrane-spanning segment. Residues Arg22 to Glu567 are Cytoplasmic-facing. Coiled coils occupy residues Arg97 to Ser188 and Arg254 to Lys465.

The protein belongs to the EzrA family.

The protein resides in the cell membrane. In terms of biological role, negative regulator of FtsZ ring formation; modulates the frequency and position of FtsZ ring formation. Inhibits FtsZ ring formation at polar sites. Interacts either with FtsZ or with one of its binding partners to promote depolymerization. The polypeptide is Septation ring formation regulator EzrA (Geobacillus sp. (strain WCH70)).